The following is a 350-amino-acid chain: UBX domain-containing protein 2B (350 aa).

Over residues 1–29 the composition is skewed to acidic residues; the sequence is MEERENSEEGDDGAGEEEEEDQGSGEDGG. The segment at 1–46 is disordered; that stretch reads MEERENSEEGDDGAGEEEEEDQGSGEDGGEVGAEREQEAELKDSLR. Residues 32 to 45 are compositionally biased toward basic and acidic residues; it reads GAEREQEAELKDSL. The region spanning 160-225 is the SEP domain; sequence EIQILLKLWS…MEDHQDQEYI (66 aa). One can recognise a UBX domain in the interval 271 to 348; sequence EHVPTTKIQI…DILNTVILQR (78 aa).

It belongs to the NSFL1C family.

It localises to the nucleus. Its subcellular location is the cytoplasm. The protein localises to the cytosol. It is found in the endoplasmic reticulum. The protein resides in the golgi apparatus. It localises to the cytoskeleton. Its subcellular location is the microtubule organizing center. The protein localises to the centrosome. Functionally, adapter protein required for Golgi and endoplasmic reticulum biogenesis. Involved in Golgi and endoplasmic reticulum maintenance during interphase and in their reassembly at the end of mitosis. Regulates the centrosomal levels of kinase aurka-a/Aurora A during mitotic progression by promoting aurka-a removal from centrosomes in prophase. Also, regulates spindle orientation during mitosis. The polypeptide is UBX domain-containing protein 2B (ubxn2b) (Xenopus laevis (African clawed frog)).